The chain runs to 103 residues: UPF0473 protein LCA_0390 (103 aa).

It belongs to the UPF0473 family.

This chain is UPF0473 protein LCA_0390, found in Latilactobacillus sakei subsp. sakei (strain 23K) (Lactobacillus sakei subsp. sakei).